Here is a 422-residue protein sequence, read N- to C-terminus: MMCSLVPSEQSSGTSLLPKDNAPFSWSSLDEDELDDSLLELSDGEDDGHFSFTEEQIQELLKDDDLSNEHFPWGGGLPSDDSRNVEKGEKGSQIPLDTPQEKDSPYNMGPEAETPDTFKLPQLTTSVGHGPTPAKSLNRRFALEKNLIKVTVAPFDPTVCDVALDKDKTYVSEVTSRVTEKPSSLGEEMREDDLSPNESTLCTESEGISPDNSASDGPPLPSSNSNFQHTVSDKNMSDSKKATPVFSQILDHSETPNTGSSRRNGSYKSSFEMKLPVSSSSSKDVLDKDSGKLKVHEKRLGKVIPVLQAKTRTNVPTFSPSDLEKQKQSYLRNVIAHIEDPVDSNQGTLGELCALMDQVHHMHNQKWQHPSDLTRRNYARFRQKSLQRYSLTQWVDRNKRSHHRFQRLPDFPYGPFVSSHQQ.

3 disordered regions span residues 1–28 (MMCS…SWSS), 61–135 (LKDD…TPAK), and 170–292 (YVSE…DSGK). The segment covering 80 to 90 (DDSRNVEKGEK) has biased composition (basic and acidic residues). S195 is modified (phosphoserine). Residues 231-241 (VSDKNMSDSKK) show a composition bias toward basic and acidic residues. Over residues 255–269 (TPNTGSSRRNGSYKS) the composition is skewed to polar residues. Over residues 274–283 (KLPVSSSSSK) the composition is skewed to low complexity.

In terms of assembly, interacts with S100P.

It is found in the nucleus. The protein is S100P-binding protein of Bos taurus (Bovine).